The chain runs to 204 residues: Glycerol-3-phosphate acyltransferase (204 aa).

5 consecutive transmembrane segments (helical) span residues 8–28 (ILIFAYLLGSINSAIIVCYIF), 53–73 (VLAAITLIFDILKGLVPVVIA), 81–101 (FITACTALYAILGHIFPIFFG), 116–136 (FGFSWILGLIFVITWLCVAII), and 155–175 (VIFTSDLQVAAPFLIIAIIIL).

This sequence belongs to the PlsY family. In terms of assembly, probably interacts with PlsX.

Its subcellular location is the cell inner membrane. It carries out the reaction an acyl phosphate + sn-glycerol 3-phosphate = a 1-acyl-sn-glycero-3-phosphate + phosphate. It participates in lipid metabolism; phospholipid metabolism. Functionally, catalyzes the transfer of an acyl group from acyl-phosphate (acyl-PO(4)) to glycerol-3-phosphate (G3P) to form lysophosphatidic acid (LPA). This enzyme utilizes acyl-phosphate as fatty acyl donor, but not acyl-CoA or acyl-ACP. This chain is Glycerol-3-phosphate acyltransferase, found in Francisella tularensis subsp. holarctica (strain OSU18).